The primary structure comprises 465 residues: SET domain-containing protein 3 (465 aa).

An SET domain is found at 18–265 (DKVTVKWDKK…AREELLDSYG (248 aa)).

The protein belongs to the class V-like SAM-binding methyltransferase superfamily.

This chain is SET domain-containing protein 3 (set-3), found in Caenorhabditis elegans.